A 92-amino-acid polypeptide reads, in one-letter code: Large ribosomal subunit protein eL31 (92 aa).

S2 is subject to N-acetylserine.

Belongs to the eukaryotic ribosomal protein eL31 family. In terms of assembly, part of the 50S ribosomal subunit.

In terms of biological role, binds to the 23S rRNA. Located at the polypeptide exit tunnel on the outside of the subunit. The protein is Large ribosomal subunit protein eL31 (rpl31e) of Haloarcula marismortui (strain ATCC 43049 / DSM 3752 / JCM 8966 / VKM B-1809) (Halobacterium marismortui).